Here is a 49-residue protein sequence, read N- to C-terminus: uncharacterized protein (49 aa).

The chain crosses the membrane as a helical span at residues 23–43 (LYVISFVLFIVLFFGMFFKLI).

The protein localises to the host membrane. This is an uncharacterized protein from Spiroplasma melliferum (SpV1).